The primary structure comprises 393 residues: 8-amino-7-oxononanoate synthase (393 aa).

107–108 (GF) contacts pyridoxal 5'-phosphate. His132 contacts substrate. Residues Ser180, 205–208 (DDAH), and 236–239 (TLSK) each bind pyridoxal 5'-phosphate. An N6-(pyridoxal phosphate)lysine modification is found at Lys239. Thr353 contacts substrate.

Belongs to the class-II pyridoxal-phosphate-dependent aminotransferase family. BioF subfamily. As to quaternary structure, homodimer. It depends on pyridoxal 5'-phosphate as a cofactor.

The catalysed reaction is 6-carboxyhexanoyl-[ACP] + L-alanine + H(+) = (8S)-8-amino-7-oxononanoate + holo-[ACP] + CO2. It participates in cofactor biosynthesis; biotin biosynthesis. Catalyzes the decarboxylative condensation of pimeloyl-[acyl-carrier protein] and L-alanine to produce 8-amino-7-oxononanoate (AON), [acyl-carrier protein], and carbon dioxide. This is 8-amino-7-oxononanoate synthase from Coprothermobacter proteolyticus (strain ATCC 35245 / DSM 5265 / OCM 4 / BT).